The chain runs to 465 residues: Ribulose bisphosphate carboxylase large chain (465 aa).

Lysine 4 carries the N6,N6,N6-trimethyllysine modification. Residues asparagine 113 and threonine 163 each contribute to the substrate site. Lysine 165 acts as the Proton acceptor in catalysis. Substrate is bound at residue lysine 167. The Mg(2+) site is built by lysine 191, aspartate 193, and glutamate 194. Position 191 is an N6-carboxylysine (lysine 191). Catalysis depends on histidine 284, which acts as the Proton acceptor. Substrate is bound by residues arginine 285, histidine 317, and serine 369.

It belongs to the RuBisCO large chain family. Type I subfamily. As to quaternary structure, heterohexadecamer of 8 large chains and 8 small chains; disulfide-linked. The disulfide link is formed within the large subunit homodimers. Mg(2+) serves as cofactor. Post-translationally, the disulfide bond which can form in the large chain dimeric partners within the hexadecamer appears to be associated with oxidative stress and protein turnover.

It is found in the plastid. Its subcellular location is the chloroplast. The enzyme catalyses 2 (2R)-3-phosphoglycerate + 2 H(+) = D-ribulose 1,5-bisphosphate + CO2 + H2O. It carries out the reaction D-ribulose 1,5-bisphosphate + O2 = 2-phosphoglycolate + (2R)-3-phosphoglycerate + 2 H(+). In terms of biological role, ruBisCO catalyzes two reactions: the carboxylation of D-ribulose 1,5-bisphosphate, the primary event in carbon dioxide fixation, as well as the oxidative fragmentation of the pentose substrate in the photorespiration process. Both reactions occur simultaneously and in competition at the same active site. This is Ribulose bisphosphate carboxylase large chain from Senega cruciata (Cross-leaved milkwort).